The sequence spans 420 residues: MVEQDPFEIAVKQLERAAQHMKISEEALEFLKRPQRIVEVTIPVEMDDGSVKVFTGFRVQYNWARGPTKGGIRWHPEETLSTVKALAAWMTWKTAVMDLPYGGGKGGIIVDPKKLSDREKERLARGYIRAVYDIISPYEDIPAPDVYTNPQIMAWMMDEYETIARRKTPAFGIITGKPLSIGGSLGRNEATARGASYTIREAAKVLGWDGLKGKTIAIQGYGNAGYYLAKIMSEDYGMKVVAVSDSKGGIYNPDGLNADEVLKWKREHGSVKDFPGATNISNEELLELDVDVLAPAAIEEVITKKNADNIKAKIVAEVANGPVTPEADEILFEKGILQIPDFLCNAGGVTVSYFEWVQNITGYYWTLEEVRERLDKKMTKAFYDVYNTAKEKNIHMRDAAYVVAVQRVYQAMLDRGWVKH.

Residue Lys-105 is part of the active site. 220–226 (GYGNAGY) serves as a coordination point for NAD(+).

It belongs to the Glu/Leu/Phe/Val dehydrogenases family. In terms of assembly, homohexamer.

It localises to the cytoplasm. It catalyses the reaction L-glutamate + NAD(+) + H2O = 2-oxoglutarate + NH4(+) + NADH + H(+). It carries out the reaction L-glutamate + NADP(+) + H2O = 2-oxoglutarate + NH4(+) + NADPH + H(+). The chain is Glutamate dehydrogenase (gdhA) from Pyrococcus horikoshii (strain ATCC 700860 / DSM 12428 / JCM 9974 / NBRC 100139 / OT-3).